A 71-amino-acid chain; its full sequence is UPF0346 protein SPG_0874 (71 aa).

This sequence belongs to the UPF0346 family.

The protein is UPF0346 protein SPG_0874 of Streptococcus pneumoniae serotype 19F (strain G54).